The chain runs to 22 residues: Chymotrypsin inhibitor (22 aa).

Positions 1 to 22 are disordered; the sequence is FDESFGFQGPSTYEKTPLGEPA.

In terms of tissue distribution, hemolymph.

It is found in the secreted. The protein localises to the extracellular space. In terms of biological role, inhibits chymotrypsin stoichiometrically. Also inhibits porcine pancreatic elastase and trypsin. This Mythimna unipuncta (Armyworm moth) protein is Chymotrypsin inhibitor.